The sequence spans 357 residues: Malonyl CoA reductase (NADP) (357 aa).

Position 13 to 16 (Thr-13 to Val-16) interacts with NADP(+). The active-site Acyl-thioester intermediate is the Cys-150. NADP(+) is bound at residue Ser-180–Gly-181. The active-site Proton acceptor is the His-245. Asn-332–Thr-333 serves as a coordination point for NADP(+).

Belongs to the aspartate-semialdehyde dehydrogenase family. In terms of assembly, homotetramer.

It catalyses the reaction 3-oxopropanoate + NADP(+) + CoA = malonyl-CoA + NADPH + H(+). In terms of biological role, catalyzes the reduction of malonyl-CoA to malonate semialdehyde, a key step in the 3-hydroxypropanoate and the 3-hydroxypropanoate/4-hydroxybutyrate cycles. The polypeptide is Malonyl CoA reductase (NADP) (Metallosphaera sedula (strain ATCC 51363 / DSM 5348 / JCM 9185 / NBRC 15509 / TH2)).